A 317-amino-acid chain; its full sequence is Sperm acrosome membrane-associated protein 6 (317 aa).

Positions 1-18 (MFVFIAKLLIFSSVITSA) are cleaved as a signal peptide. At 19 to 281 (FTCYQCFIDE…PSFSFWLPRP (263 aa)) the chain is on the extracellular side. Intrachain disulfides connect cysteine 21-cysteine 143, cysteine 24-cysteine 146, cysteine 35-cysteine 51, cysteine 128-cysteine 151, and cysteine 132-cysteine 157. Asparagine 29 carries N-linked (GlcNAc...) asparagine glycosylation. In terms of domain architecture, Ig-like spans 123 to 237 (PRVSGCLPPC…EVLSQEQSLV (115 aa)). Asparagine 168 carries an N-linked (GlcNAc...) asparagine glycan. Cysteines 174 and 227 form a disulfide. The chain crosses the membrane as a helical span at residues 282-302 (ALLITCLTATMLLIFLSLGAM). Residues 303-317 (CRLWYQIRTNVSNPA) are Cytoplasmic-facing.

The protein belongs to the SPACA6 family. Forms a complex with izumo1 and tmem81 on spermatocyte cell membrane. The complex binds to oocyte protein bncr. As to expression, expressed in testis.

It localises to the cytoplasmic vesicle. The protein localises to the secretory vesicle. It is found in the acrosome membrane. Its function is as follows. Sperm protein required for fusion of sperm with the egg membrane during fertilization. May regulate the expression of sperm surface protein DCST2. The protein is Sperm acrosome membrane-associated protein 6 of Danio rerio (Zebrafish).